Here is a 178-residue protein sequence, read N- to C-terminus: uncharacterized protein (178 aa).

The first 19 residues, 1-19 (MKKNIHILGASGVGTSTLG), serve as a signal peptide directing secretion.

This is an uncharacterized protein from Bacillus subtilis (strain 168).